The chain runs to 858 residues: Volume-regulated anion channel subunit LRRC8D (858 aa).

Topologically, residues methionine 1–proline 22 are cytoplasmic. The chain crosses the membrane as a helical span at residues tryptophan 23–threonine 48. Topologically, residues lysine 49–lysine 163 are extracellular. An intrachain disulfide couples cysteine 54 to cysteine 354. Residues alanine 118 to arginine 137 form a disordered region. The segment covering glutamate 126 to arginine 137 has biased composition (basic and acidic residues). Residues tyrosine 164–phenylalanine 182 form a helical membrane-spanning segment. Residues tryptophan 183–tyrosine 308 are Cytoplasmic-facing. Positions serine 221 to threonine 251 are disordered. Positions arginine 227 to threonine 251 are enriched in polar residues. Serine 241, serine 242, and serine 246 each carry phosphoserine. The helical transmembrane segment at valine 309–valine 330 threads the bilayer. The Extracellular segment spans residues asparagine 331–tyrosine 360. The chain crosses the membrane as a helical span at residues methionine 361 to tryptophan 386. The Cytoplasmic segment spans residues leucine 387–isoleucine 858. LRR repeat units lie at residues asparagine 514–phenylalanine 534, histidine 538–leucine 559, asparagine 561–glutamate 582, histidine 589–valine 609, histidine 612–lysine 632, asparagine 636–leucine 657, asparagine 659–glutamine 680, arginine 684–valine 705, asparagine 707–leucine 728, lysine 730–leucine 751, asparagine 753–cysteine 774, lysine 776–leucine 797, and glutamine 799–cysteine 820.

It belongs to the LRRC8 family. Heterohexamer; oligomerizes with other LRRC8 proteins (LRRC8A, LRRC8B, LRRC8C and/or LRRC8E) to form a heterohexamer. In vivo, the subunit composition may depend primarily on expression levels, and heterooligomeric channels containing various proportions of the different LRRC8 proteins may coexist.

It is found in the cell membrane. It localises to the endoplasmic reticulum membrane. The catalysed reaction is chloride(in) = chloride(out). It catalyses the reaction iodide(out) = iodide(in). It carries out the reaction taurine(out) = taurine(in). Functionally, non-essential component of the volume-regulated anion channel (VRAC, also named VSOAC channel), an anion channel required to maintain a constant cell volume in response to extracellular or intracellular osmotic changes. The VRAC channel conducts iodide better than chloride and can also conduct organic osmolytes like taurine. Plays a redundant role in the efflux of amino acids, such as aspartate, in response to osmotic stress. Channel activity requires LRRC8A plus at least one other family member (LRRC8B, LRRC8C, LRRC8D or LRRC8E); channel characteristics depend on the precise subunit composition. Also acts as a regulator of glucose-sensing in pancreatic beta cells: VRAC currents, generated in response to hypotonicity- or glucose-induced beta cell swelling, depolarize cells, thereby causing electrical excitation, leading to increase glucose sensitivity and insulin secretion. VRAC channels containing LRRC8D inhibit transport of immunoreactive cyclic dinucleotide GMP-AMP (2'-3'-cGAMP), an immune messenger produced in response to DNA virus in the cytosol. The sequence is that of Volume-regulated anion channel subunit LRRC8D from Rattus norvegicus (Rat).